A 649-amino-acid polypeptide reads, in one-letter code: MEGPSSSSVPTASDAPSKYLLPSDSDDGIATSSAANVGARNHVTNTEKMEKEKKPSPMVLNVDPDYDYDEEDGGSCEEDQRGPPAPISREIVDGAIARRSRDRQISPGVKMSIGNYDDMEDDDEEAETPEEQKQRFLASMKRIRNQPQEAFDPPEDTEAMREFINRQVNDAMMFNRDNHIDYSPVNKPKEAKIIEGYLWGGIIGTGSYGKVKEVIDIYTITRRAAKIMKYEKLRKIPNGWDNIRSEMSILRRLNHRNIVKLIEVFNLPEKGKVYMIFEYCIGSVQNLIDMEPAHRLSIGESHAIFLELCHGLNYLHSKRVSHKDIKPGNLLLSIDMTVKICDFGVAEQICLFQSDGRCTKVNGTPKFQPPECVYGNHEYFDGYKVDMWSAGVTLYNMVSGKYPFEQQVLLRLYESIGTNPVEMPTNVELSKDLQDIIKRLLDKDFNTRPNISDVMQHPWFQTGFPEDQGLGRIMERMRTGDRPFTMYPSLQAMYDGAGSEVILDEDGNELVLPPPDLVKRGLKFFLELKILENLPGTLSLSSFPGFQTLEKRPGDGPPPSSDSGVVAAPDSASGDPLRRPSSRSMPTSAPPRPPSGAVEVVEAVAAPEAVVEDPVVEEAPAQQQEAPDRRRRGKRSLFSCIFRSRTDSS.

Positions M1–T11 are enriched in polar residues. A disordered region spans residues M1–Q132. Positions N45 to P55 are enriched in basic and acidic residues. Acidic residues-rich tracts occupy residues P64–E77 and D117–P129. The Protein kinase domain occupies Y197–F460. ATP-binding positions include I203–V211 and K226. The Proton acceptor role is filled by D324. Residues T548–S649 are disordered. Residues A597 to A609 are compositionally biased toward low complexity.

It belongs to the protein kinase superfamily. CAMK Ser/Thr protein kinase family. LKB1 subfamily. Mg(2+) serves as cofactor. The cofactor is Mn(2+).

The protein localises to the cytoplasm. It is found in the cell cortex. It catalyses the reaction L-seryl-[protein] + ATP = O-phospho-L-seryl-[protein] + ADP + H(+). The catalysed reaction is L-threonyl-[protein] + ATP = O-phospho-L-threonyl-[protein] + ADP + H(+). Its function is as follows. Required for cytoplasmic partitioning and asymmetric cell division in early embryogenesis. Phosphorylates and restricts the asymmetry effectors mex-5 and mex-6 to the anterior cytoplasm of the zygote and maintains these phosphorylations until fertilization. Phosphorylates and regulates aak-2 in response to oxidative stress. May also play a role in motility, behavioral response, regulation of lifespan and dauer formation through this pathway. The chain is Serine/threonine-protein kinase par-4 from Caenorhabditis briggsae.